The following is a 274-amino-acid chain: Penicillin-insensitive murein endopeptidase (274 aa).

Residues 1-19 (MNKTAIALLALLASSASLA) form the signal peptide. Intrachain disulfides connect C44-C265, C187-C235, and C216-C223. Zn(2+)-binding residues include H110, H113, D120, D147, H150, and H211. The disordered stretch occupies residues 227–274 (PLPPPGDGCGAELQSWFEPPKPGTTKPEKKTPPPLPPSCQALLDEHVI).

It belongs to the peptidase M74 family. As to quaternary structure, dimer. Zn(2+) is required as a cofactor.

The protein resides in the periplasm. Functionally, murein endopeptidase that cleaves the D-alanyl-meso-2,6-diamino-pimelyl amide bond that connects peptidoglycan strands. Likely plays a role in the removal of murein from the sacculus. This is Penicillin-insensitive murein endopeptidase from Escherichia coli O1:K1 / APEC.